An 835-amino-acid polypeptide reads, in one-letter code: Translation initiation factor IF-2 (835 aa).

Positions 1–243 (MSDTDGKKTL…RARQKAMGGA (243 aa)) are disordered. Residues 43-67 (VPKPGAGKPSAGGSSPAGDPSRRPA) show a composition bias toward low complexity. Basic and acidic residues-rich tracts occupy residues 85-147 (KARE…EAKR), 157-166 (EAPKAERSAE), and 175-205 (EGGD…DGRR). One can recognise a tr-type G domain in the interval 332–500 (PRPPVITIMG…AIALQAEILE (169 aa)). The interval 341 to 348 (GHVDHGKT) is G1. 341–348 (GHVDHGKT) contributes to the GTP binding site. The G2 stretch occupies residues 366-370 (GITQH). Residues 388–391 (DTPG) are G3. GTP contacts are provided by residues 388-392 (DTPGH) and 442-445 (NKID). The G4 stretch occupies residues 442–445 (NKID). The segment at 478–480 (SAK) is G5.

This sequence belongs to the TRAFAC class translation factor GTPase superfamily. Classic translation factor GTPase family. IF-2 subfamily.

It localises to the cytoplasm. Its function is as follows. One of the essential components for the initiation of protein synthesis. Protects formylmethionyl-tRNA from spontaneous hydrolysis and promotes its binding to the 30S ribosomal subunits. Also involved in the hydrolysis of GTP during the formation of the 70S ribosomal complex. The protein is Translation initiation factor IF-2 of Ruegeria pomeroyi (strain ATCC 700808 / DSM 15171 / DSS-3) (Silicibacter pomeroyi).